Consider the following 342-residue polypeptide: N-acetyl-gamma-glutamyl-phosphate reductase (342 aa).

The active site involves cysteine 149.

Belongs to the NAGSA dehydrogenase family. Type 1 subfamily.

The protein localises to the cytoplasm. It carries out the reaction N-acetyl-L-glutamate 5-semialdehyde + phosphate + NADP(+) = N-acetyl-L-glutamyl 5-phosphate + NADPH + H(+). Its pathway is amino-acid biosynthesis; L-arginine biosynthesis; N(2)-acetyl-L-ornithine from L-glutamate: step 3/4. In terms of biological role, catalyzes the NADPH-dependent reduction of N-acetyl-5-glutamyl phosphate to yield N-acetyl-L-glutamate 5-semialdehyde. This Jannaschia sp. (strain CCS1) protein is N-acetyl-gamma-glutamyl-phosphate reductase.